A 107-amino-acid polypeptide reads, in one-letter code: Early E3A 12.5 kDa protein (107 aa).

This sequence belongs to the adenoviridae E3A-2 family.

Its function is as follows. Not yet known. This chain is Early E3A 12.5 kDa protein, found in Human adenovirus C serotype 5 (HAdV-5).